A 492-amino-acid polypeptide reads, in one-letter code: Putative methyl-accepting chemotaxis AlkN (492 aa).

The next 2 membrane-spanning stretches (helical) occupy residues 9–29 and 159–179; these read FFLILVMAGFSFFVALFGMRL and YVYFLVVSINCLFFVVIFLLM. Residues 180–231 form the HAMP domain; that stretch reads KKTRSSIDEIVHVMNDMSRGDLTYRTIPSNDEVGKMQSSIIAMGAGVSALIE. Residues 236–472 enclose the Methyl-accepting transducer domain; that stretch reads IQGDLFNSAG…DMLDNANIIR (237 aa).

The protein belongs to the methyl-accepting chemotaxis (MCP) protein family.

Its subcellular location is the membrane. The protein operates within hydrocarbon metabolism; alkane degradation. Its function is as follows. Chemotactic-signal transducers respond to changes in the concentration of attractants and repellents in the environment, transduce a signal from the outside to the inside of the cell, and facilitate sensory adaptation through the variation of the level of methylation. The protein is Putative methyl-accepting chemotaxis AlkN (alkN) of Ectopseudomonas oleovorans (Pseudomonas oleovorans).